Consider the following 327-residue polypeptide: MSLNEPIKKVSIVIPVYNEQESLPALIDRTTAACKLLTQAYEIILVDDGSSDNSTELLTAAANDPDSHIIAILLNRNYGQHSAIMAGFNQVSGDLIITLDADLQNPPEETPRLVHVAEEGYDVVGTVRANRQDSLFRKTASRMINMMIQRATGKSMGDYGCMLRAYRRHIVEAMLHCHERSTFIPILANTFARRTTEITVHHAEREFGNSKYSLMRLINLMYDLITCLTTTPLRLLSLVGSAIALLGFTFSVLLVALRLIFGPEWAGGGVFTLFAVLFMFIGAQFVGMGLLGEYIGRIYNDVRARPRYFVQKVVGAEQTENNQDVEK.

The next 2 membrane-spanning stretches (helical) occupy residues 235 to 255 (LLSL…VLLV) and 270 to 290 (VFTL…GMGL).

The protein belongs to the glycosyltransferase 2 family.

The protein resides in the cell inner membrane. The catalysed reaction is UDP-4-deoxy-4-formamido-beta-L-arabinose + di-trans,octa-cis-undecaprenyl phosphate = 4-deoxy-4-formamido-alpha-L-arabinopyranosyl di-trans,octa-cis-undecaprenyl phosphate + UDP. The protein operates within glycolipid biosynthesis; 4-amino-4-deoxy-alpha-L-arabinose undecaprenyl phosphate biosynthesis; 4-amino-4-deoxy-alpha-L-arabinose undecaprenyl phosphate from UDP-4-deoxy-4-formamido-beta-L-arabinose and undecaprenyl phosphate: step 1/2. Its pathway is bacterial outer membrane biogenesis; lipopolysaccharide biosynthesis. Its function is as follows. Catalyzes the transfer of 4-deoxy-4-formamido-L-arabinose from UDP to undecaprenyl phosphate. The modified arabinose is attached to lipid A and is required for resistance to polymyxin and cationic antimicrobial peptides. The chain is Undecaprenyl-phosphate 4-deoxy-4-formamido-L-arabinose transferase from Yersinia pestis bv. Antiqua (strain Antiqua).